Consider the following 219-residue polypeptide: MIEYIIGKISYKNNNYLILENNFKGYKLFMSDPNIFEENSSAKIFVYTKIFQNNKNNFLFEYYGFKTLREKIFFENLLTVNGIGPKTSLTILRNDLNLLKELIRNEDIESLSVLEGFTNKTALSIVSALSYKLKNERISEYNNDVNHSSINQQSNSYNPVPDLVSALKALGYKKNMIEKAINLLIPQLSNVSEDQISDLISQAIKIISDEAVTNKTTVS.

The tract at residues 1-66 (MIEYIIGKIS…NFLFEYYGFK (66 aa)) is domain I. Residues 67–148 (TLREKIFFEN…SEYNNDVNHS (82 aa)) are domain II. Positions 149-154 (SINQQS) are flexible linker. The interval 155 to 219 (NSYNPVPDLV…EAVTNKTTVS (65 aa)) is domain III.

Belongs to the RuvA family. In terms of assembly, homotetramer. Forms an RuvA(8)-RuvB(12)-Holliday junction (HJ) complex. HJ DNA is sandwiched between 2 RuvA tetramers; dsDNA enters through RuvA and exits via RuvB. An RuvB hexamer assembles on each DNA strand where it exits the tetramer. Each RuvB hexamer is contacted by two RuvA subunits (via domain III) on 2 adjacent RuvB subunits; this complex drives branch migration. In the full resolvosome a probable DNA-RuvA(4)-RuvB(12)-RuvC(2) complex forms which resolves the HJ.

Its subcellular location is the cytoplasm. Functionally, the RuvA-RuvB-RuvC complex processes Holliday junction (HJ) DNA during genetic recombination and DNA repair, while the RuvA-RuvB complex plays an important role in the rescue of blocked DNA replication forks via replication fork reversal (RFR). RuvA specifically binds to HJ cruciform DNA, conferring on it an open structure. The RuvB hexamer acts as an ATP-dependent pump, pulling dsDNA into and through the RuvAB complex. HJ branch migration allows RuvC to scan DNA until it finds its consensus sequence, where it cleaves and resolves the cruciform DNA. The sequence is that of Holliday junction branch migration complex subunit RuvA from Malacoplasma penetrans (strain HF-2) (Mycoplasma penetrans).